The following is a 719-amino-acid chain: Polyribonucleotide nucleotidyltransferase (719 aa).

Mg(2+)-binding residues include Asp487 and Asp493. The region spanning 554–613 (PRIETFKIATDKIREVIGTGGKVIREIVEKTGAKVNIEDDGTVKVASSDGEAMKAAIKWI) is the KH domain. Positions 623 to 691 (GQIYDGTVVK…DRGKTRLSMK (69 aa)) constitute an S1 motif domain. The disordered stretch occupies residues 691–719 (KVVDQTTGEDLEAKQKDAPAEAPREAAGE). Residues 701–719 (LEAKQKDAPAEAPREAAGE) show a composition bias toward basic and acidic residues.

The protein belongs to the polyribonucleotide nucleotidyltransferase family. Mg(2+) is required as a cofactor.

It is found in the cytoplasm. It catalyses the reaction RNA(n+1) + phosphate = RNA(n) + a ribonucleoside 5'-diphosphate. Involved in mRNA degradation. Catalyzes the phosphorolysis of single-stranded polyribonucleotides processively in the 3'- to 5'-direction. This chain is Polyribonucleotide nucleotidyltransferase, found in Bradyrhizobium sp. (strain ORS 278).